Consider the following 134-residue polypeptide: Phosphoribosyl-AMP cyclohydrolase (134 aa).

Asp77 provides a ligand contact to Mg(2+). Residue Cys78 coordinates Zn(2+). Mg(2+) contacts are provided by Asp79 and Asp81. 2 residues coordinate Zn(2+): Cys95 and Cys102.

It belongs to the PRA-CH family. In terms of assembly, homodimer. Requires Mg(2+) as cofactor. It depends on Zn(2+) as a cofactor.

The protein localises to the cytoplasm. It carries out the reaction 1-(5-phospho-beta-D-ribosyl)-5'-AMP + H2O = 1-(5-phospho-beta-D-ribosyl)-5-[(5-phospho-beta-D-ribosylamino)methylideneamino]imidazole-4-carboxamide. The protein operates within amino-acid biosynthesis; L-histidine biosynthesis; L-histidine from 5-phospho-alpha-D-ribose 1-diphosphate: step 3/9. Its function is as follows. Catalyzes the hydrolysis of the adenine ring of phosphoribosyl-AMP. This Pseudomonas aeruginosa (strain UCBPP-PA14) protein is Phosphoribosyl-AMP cyclohydrolase.